The chain runs to 122 residues: Large ribosomal subunit protein uL14 (122 aa).

Belongs to the universal ribosomal protein uL14 family. As to quaternary structure, part of the 50S ribosomal subunit. Forms a cluster with proteins L3 and L19. In the 70S ribosome, L14 and L19 interact and together make contacts with the 16S rRNA in bridges B5 and B8.

Binds to 23S rRNA. Forms part of two intersubunit bridges in the 70S ribosome. The polypeptide is Large ribosomal subunit protein uL14 (Ruegeria pomeroyi (strain ATCC 700808 / DSM 15171 / DSS-3) (Silicibacter pomeroyi)).